The primary structure comprises 308 residues: Pseudouridine-5'-phosphate glycosidase (308 aa).

The active-site Proton donor is Glu-28. Residues Lys-89 and Val-109 each coordinate substrate. Position 141 (Asp-141) interacts with Mn(2+). 143–145 (SAD) is a binding site for substrate. The Nucleophile role is filled by Lys-162.

Belongs to the pseudouridine-5'-phosphate glycosidase family. In terms of assembly, homotrimer. Requires Mn(2+) as cofactor.

The enzyme catalyses D-ribose 5-phosphate + uracil = psi-UMP + H2O. Functionally, catalyzes the reversible cleavage of pseudouridine 5'-phosphate (PsiMP) to ribose 5-phosphate and uracil. Functions biologically in the cleavage direction, as part of a pseudouridine degradation pathway. The sequence is that of Pseudouridine-5'-phosphate glycosidase from Brachyspira hyodysenteriae (strain ATCC 49526 / WA1).